The following is a 570-amino-acid chain: Probable metalloreductase AIM14 (570 aa).

The Extracellular segment spans residues 1-20 (MKESPLITLVKRHSETHFAN). The helical transmembrane segment at 21–41 (IKYGYYVLIISLVYLIGLALL) threads the bilayer. Topologically, residues 42 to 69 (RAFGRRTPSRSSSAFKNKIIYRLYDIDP) are cytoplasmic. A helical membrane pass occupies residues 70–90 (AIHLGILFFAVLIPFYYHYSL). Residues 91–141 (TTQSTVYLKRLGRLSYALIPLNLFLTLRPNWFLRKNCTYTDFIPFHKWFSR) lie on the Extracellular side of the membrane. One can recognise a Ferric oxidoreductase domain in the interval 101–219 (LGRLSYALIP…NLVNVAFILL (119 aa)). The helical transmembrane segment at 142–162 (IITVIGLLHGIFFIIKWAIDD) threads the bilayer. Residues 163 to 176 (NVSLKQKLILKTFN) are Cytoplasmic-facing. A helical transmembrane segment spans residues 177–197 (FAGFIISILVLFLLICSIGPM). Residues 198 to 373 (RRYNYRLFYI…PEECYSQGTN (176 aa)) lie on the Extracellular side of the membrane. Residues 250 to 388 (FAKSLMILNK…GGSGISFALP (139 aa)) enclose the FAD-binding FR-type domain. The helical transmembrane segment at 374–394 (IAIICGGSGISFALPLFRHFF) threads the bilayer. Residues 395-570 (NKENVKYLKM…INFVCETYGL (176 aa)) lie on the Cytoplasmic side of the membrane. Residues 480–505 (ISNFNSENADSNDNTPETSHSPTKEN) are compositionally biased toward polar residues. The disordered stretch occupies residues 480–509 (ISNFNSENADSNDNTPETSHSPTKENGSMI).

The protein belongs to the ferric reductase (FRE) family. AIM14 subfamily. Interacts with ribosomes.

Its subcellular location is the membrane. In terms of biological role, probable cell surface metalloreductase. May be involved in iron or copper homeostasis. This chain is Probable metalloreductase AIM14 (AIM14), found in Saccharomyces cerevisiae (strain ATCC 204508 / S288c) (Baker's yeast).